The following is a 152-amino-acid chain: Protein NrdI (152 aa).

The protein belongs to the NrdI family.

Its function is as follows. Probably involved in ribonucleotide reductase function. The sequence is that of Protein NrdI from Rhodococcus opacus (strain B4).